Reading from the N-terminus, the 252-residue chain is Probable transcriptional regulatory protein A1E_02520 (252 aa).

This sequence belongs to the TACO1 family.

The protein localises to the cytoplasm. The polypeptide is Probable transcriptional regulatory protein A1E_02520 (Rickettsia canadensis (strain McKiel)).